The primary structure comprises 72 residues: Conotoxin Ep11.1 (72 aa).

The first 19 residues, 1 to 19 (MKLCVTFLLILVILPSVTG), serve as a signal peptide directing secretion. The propeptide occupies 20 to 32 (EKSSKRTLSGAAL). Disulfide bonds link Cys-39–Cys-53, Cys-46–Cys-58, Cys-52–Cys-63, and Cys-57–Cys-70.

The protein belongs to the conotoxin I1 superfamily. As to expression, expressed by the venom duct.

The protein localises to the secreted. This Conus episcopatus (Bishop's cone) protein is Conotoxin Ep11.1.